Reading from the N-terminus, the 172-residue chain is MVEKRDSYTKEDLEASGRGELFGAGGPPLPAGNMLMMDRVVKMTEDGGTHNKGYVEAELDINPDLWFFGCHFIGDPVMPGCLGLDAMWQLVGFYLGWLGGEGKGRALGVGEVKFTGQVLPTAKKVTYRINFKRVIIRKLIMGVADGEVLVDGQVIYTASDLKVGLFKDTAAF.

Residue H71 is part of the active site.

It belongs to the thioester dehydratase family. FabA subfamily. Homodimer.

It localises to the cytoplasm. The enzyme catalyses a (3R)-hydroxyacyl-[ACP] = a (2E)-enoyl-[ACP] + H2O. It catalyses the reaction (3R)-hydroxydecanoyl-[ACP] = (2E)-decenoyl-[ACP] + H2O. It carries out the reaction (2E)-decenoyl-[ACP] = (3Z)-decenoyl-[ACP]. Its pathway is lipid metabolism; fatty acid biosynthesis. Necessary for the introduction of cis unsaturation into fatty acids. Catalyzes the dehydration of (3R)-3-hydroxydecanoyl-ACP to E-(2)-decenoyl-ACP and then its isomerization to Z-(3)-decenoyl-ACP. Can catalyze the dehydratase reaction for beta-hydroxyacyl-ACPs with saturated chain lengths up to 16:0, being most active on intermediate chain length. This Serratia proteamaculans (strain 568) protein is 3-hydroxydecanoyl-[acyl-carrier-protein] dehydratase.